A 552-amino-acid chain; its full sequence is Autoimmune regulator (552 aa).

The HSR domain maps to 1 to 106 (MAGGDGMLRR…ILDGFPKDVD (106 aa)). Short sequence motifs (LXXLL motif) lie at residues 8–12 (LRRLL) and 64–68 (LSWLL). Positions 109–177 (QSRKGRKPLA…DGNLESQHLP (69 aa)) are disordered. Positions 114–134 (RKPLAGPKAAVLPPRPPTKRK) match the Nuclear localization signal motif. An SAND domain is found at 182-282 (IQTMAASVQR…QKVGQQCGVP (101 aa)). The PHD-type 1 zinc finger occupies 298–345 (EDECAVCHDGGELICCDGCPRAFHLACLSPPLQEIPSGLWRCSCCLQG). Residues 414–418 (LCPLL) carry the LXXLL motif 3 motif. The PHD-type 2 zinc-finger motif lies at 434 to 475 (CSVCGDGTEVLRCAHCAAAFHWRCHFPTAAARPGTNLRCKSC). The tract at residues 472–514 (CKSCSADSTPTPGTPGEAVPTSGPRPAPGLAKVGDDSASHDPV) is disordered. A compositionally biased stretch (basic and acidic residues) spans 504–514 (VGDDSASHDPV). The short motif at 520–524 (LESLL) is the LXXLL motif 4 element.

Homodimer and homotetramer. Interacts with CREBBP. Interacts preferentially with histone H3 that is not methylated at 'Lys-4'. Binds with lower affinity to histone H3 that is monomethylated at 'Lys-4'. Trimethylation of histone H3 at 'Lys-4' or phosphorylation at 'Thr-3' abolish the interaction. Binds with lower affinity to histone H3 that is acetylated at 'Lys-4', or that is acetylated at 'Lys-9' or trimethylated at 'Lys-9'. Binds histone H3 that is dimethylated at 'Arg-2' with very low affinity. Post-translationally, phosphorylated. In terms of tissue distribution, highly expressed in a few cells in the medulla of the thymus (medullary epithelial cells) (at protein level). Expressed in thymic but no peripheral B-cells. In secondary lymphoid organs, expressed in a discrete population of bone marrow-derived toleregenic antigen presenting cells (APCs) called extrathymic AIRE expressing cells (eTAC)(at protein level). Detected at very low levels in thymus, lymph node, liver, brain, ovary, lung, testis, kidney, heart, spleen, bone marrow, skeletal muscle and adrenal gland. Isoforms 1a to 1d predominate, isoforms 2a to 2d are intermediate and isoforms 3a to 3d are expressed at extremely low levels.

It is found in the nucleus. It localises to the cytoplasm. Functionally, transcription factor playing an essential role to promote self-tolerance in the thymus by regulating the expression of a wide array of self-antigens that have the commonality of being tissue-restricted in their expression pattern in the periphery, called tissue restricted antigens (TRA). Binds to G-doublets in an A/T-rich environment; the preferred motif is a tandem repeat of 5'-. ATTGGTTA-3' combined with a 5'-TTATTA-3' box. Binds to nucleosomes. Binds to chromatin and interacts selectively with histone H3 that is not methylated at 'Lys-4', not phosphorylated at 'Thr-3' and not methylated at 'Arg-2'. Functions as a sensor of histone H3 modifications that are important for the epigenetic regulation of gene expression. Mainly expressed by medullary thymic epithelial cells (mTECs), induces the expression of thousands of tissue-restricted proteins, which are presented on major histocompatibility complex class I (MHC-I) and MHC-II molecules to developing T-cells percolating through the thymic medulla. Also induces self-tolerance through other mechanisms such as the regulation of the mTEC differentiation program. Controls the medullary accumulation of thymic dendritic cells and the development of regulatory T-cell through the regulation of XCL1 expression. Regulates the production of CCR4 and CCR7 ligands in medullary thymic epithelial cells and alters the coordinated maturation and migration of thymocytes. In thimic B-cells, allows the presentation of licensing-dependent endogenous self-anitgen for negative selection. In secondary lymphoid organs, induces functional inactivation of CD4(+) T-cells. Expressed by a distinct bone marrow-derived population, induces self-tolerance through a mechanism that does not require regulatory T-cells and is resitant to innate inflammatory stimuli. The protein is Autoimmune regulator (Aire) of Mus musculus (Mouse).